Reading from the N-terminus, the 365-residue chain is Anthranilate phosphoribosyltransferase (365 aa).

5-phospho-alpha-D-ribose 1-diphosphate-binding positions include Gly-96, 99-100 (GD), Thr-104, 106-109 (NIST), 124-132 (KHGNRSVSS), and Ser-136. Gly-96 lines the anthranilate pocket. A Mg(2+)-binding site is contributed by Ser-108. Asn-127 is an anthranilate binding site. Anthranilate is bound at residue Arg-182. 2 residues coordinate Mg(2+): Asp-240 and Glu-241.

The protein belongs to the anthranilate phosphoribosyltransferase family. As to quaternary structure, homodimer. The cofactor is Mg(2+).

The enzyme catalyses N-(5-phospho-beta-D-ribosyl)anthranilate + diphosphate = 5-phospho-alpha-D-ribose 1-diphosphate + anthranilate. Its pathway is amino-acid biosynthesis; L-tryptophan biosynthesis; L-tryptophan from chorismate: step 2/5. Catalyzes the transfer of the phosphoribosyl group of 5-phosphorylribose-1-pyrophosphate (PRPP) to anthranilate to yield N-(5'-phosphoribosyl)-anthranilate (PRA). The sequence is that of Anthranilate phosphoribosyltransferase from Colwellia psychrerythraea (strain 34H / ATCC BAA-681) (Vibrio psychroerythus).